We begin with the raw amino-acid sequence, 833 residues long: Glycerol-3-phosphate acyltransferase (833 aa).

Residues 309-314 carry the HXXXXD motif motif; sequence CHRSHI.

The protein belongs to the GPAT/DAPAT family.

The protein resides in the cell inner membrane. It catalyses the reaction sn-glycerol 3-phosphate + an acyl-CoA = a 1-acyl-sn-glycero-3-phosphate + CoA. It functions in the pathway phospholipid metabolism; CDP-diacylglycerol biosynthesis; CDP-diacylglycerol from sn-glycerol 3-phosphate: step 1/3. The sequence is that of Glycerol-3-phosphate acyltransferase from Pseudomonas savastanoi pv. phaseolicola (strain 1448A / Race 6) (Pseudomonas syringae pv. phaseolicola (strain 1448A / Race 6)).